Reading from the N-terminus, the 155-residue chain is Nodulin-related protein 2 (155 aa).

The residue at position 1 (Met1) is an N-acetylmethionine. Disordered stretches follow at residues 1-37 (MNFI…PATN) and 85-155 (DEKS…GFLK). Basic and acidic residues predominate over residues 95–106 (DKAEKYLNDYES). The span at 120-130 (SQAEPASQPEP) shows a compositional bias: low complexity.

In terms of assembly, interacts with DEK3.

May be a negative regulator of the ABA signaling/synthesis pathway. This is Nodulin-related protein 2 from Arabidopsis thaliana (Mouse-ear cress).